We begin with the raw amino-acid sequence, 206 residues long: Small ribosomal subunit protein uS4A (206 aa).

One can recognise an S4 RNA-binding domain in the interval 96–156 (GRLDNVVYRM…EKAKKQSRIG (61 aa)).

This sequence belongs to the universal ribosomal protein uS4 family. As to quaternary structure, part of the 30S ribosomal subunit. Contacts protein S5. The interaction surface between S4 and S5 is involved in control of translational fidelity.

One of the primary rRNA binding proteins, it binds directly to 16S rRNA where it nucleates assembly of the body of the 30S subunit. In terms of biological role, with S5 and S12 plays an important role in translational accuracy. This is Small ribosomal subunit protein uS4A from Psychromonas ingrahamii (strain DSM 17664 / CCUG 51855 / 37).